The primary structure comprises 409 residues: 2-methylfumaryl-CoA isomerase (409 aa).

The Nucleophile role is filled by aspartate 165.

It belongs to the CoA-transferase III family. Mesaconyl-CoA isomerase subfamily. Homodimer.

It catalyses the reaction 2-methylfumaryl-CoA = 3-methylfumaryl-CoA. Partially inhibited by hydroxylamine. Involved in the glyoxylate assimilation cycle used to regenerate acetyl-CoA and produce pyruvate as universal precursor for biosynthesis. This reaction involves an intramolecular CoA transferase that catalyzes the reversible transfer of the CoA moiety from the C1-carboxyl group of mesaconyl-CoA to the C4-carboxyl group. It does not require free mesaconate as CoA acceptor. In Chloroflexus aurantiacus (strain ATCC 29366 / DSM 635 / J-10-fl), this protein is 2-methylfumaryl-CoA isomerase (mct).